A 667-amino-acid polypeptide reads, in one-letter code: Probable sulfate permease C320.05 (667 aa).

The tract at residues 1-27 is disordered; that stretch reads MSSPSENHLLGPKTSFIDNRTSTSRPL. Residues 16–25 show a composition bias toward polar residues; it reads FIDNRTSTSR. Helical transmembrane passes span 77–97, 102–122, 162–182, 198–218, 240–260, 275–295, 301–321, 336–356, 368–388, 405–425, 433–453, and 465–485; these read IIWD…IALS, FLGV…ILYC, ILVT…AGLF, GCIL…FFGF, MSKA…LLIG, IVSI…SKKF, YGIA…LPLP, GVMC…AISL, LISL…PICG, VATI…MPVF, LASM…VEIF, and GIIF…GIIF. The 126-residue stretch at 532-657 folds into the STAS domain; the sequence is SSTAVESAPR…DHVQDSIKKV (126 aa).

It belongs to the SLC26A/SulP transporter (TC 2.A.53) family.

It is found in the endoplasmic reticulum membrane. Functionally, possible sulfate transporter. This is Probable sulfate permease C320.05 from Schizosaccharomyces pombe (strain 972 / ATCC 24843) (Fission yeast).